Here is a 156-residue protein sequence, read N- to C-terminus: Small ribosomal subunit protein uS7 (156 aa).

This sequence belongs to the universal ribosomal protein uS7 family. Part of the 30S ribosomal subunit. Contacts proteins S9 and S11.

Its function is as follows. One of the primary rRNA binding proteins, it binds directly to 16S rRNA where it nucleates assembly of the head domain of the 30S subunit. Is located at the subunit interface close to the decoding center, probably blocks exit of the E-site tRNA. This is Small ribosomal subunit protein uS7 from Herminiimonas arsenicoxydans.